The following is a 405-amino-acid chain: Acetate kinase (405 aa).

Asn-7 contacts Mg(2+). Lys-14 is a binding site for ATP. Residue Arg-91 participates in substrate binding. The active-site Proton donor/acceptor is the Asp-148. ATP is bound by residues 208–212 and 283–285; these read HLGNG and DFR. Glu-384 is a Mg(2+) binding site.

Belongs to the acetokinase family. Homodimer. Mg(2+) serves as cofactor. It depends on Mn(2+) as a cofactor.

The protein resides in the cytoplasm. It catalyses the reaction acetate + ATP = acetyl phosphate + ADP. The protein operates within metabolic intermediate biosynthesis; acetyl-CoA biosynthesis; acetyl-CoA from acetate: step 1/2. Catalyzes the formation of acetyl phosphate from acetate and ATP. Can also catalyze the reverse reaction. The chain is Acetate kinase from Dictyoglomus turgidum (strain DSM 6724 / Z-1310).